Consider the following 189-residue polypeptide: MRVPKKERQTELQHTIEQNPFITDEALATHFNVSIQTIRLDRMEMKIPELRERIKHVATERLDDVRTLTENEVIGDMIDLKLDTSAISILEILPEHAFSRNAIARGHILFAQANSLAIALIDDELALTTKANVQFTRSVHVGERVVAKAFVSSHRQDGRSDINVESFVGDECVFIGEFTVYRSSKEESK.

The protein belongs to the FapR family.

In terms of biological role, transcriptional factor involved in regulation of membrane lipid biosynthesis by repressing genes involved in fatty acid and phospholipid metabolism. The protein is Transcription factor FapR of Exiguobacterium sibiricum (strain DSM 17290 / CCUG 55495 / CIP 109462 / JCM 13490 / 255-15).